A 353-amino-acid chain; its full sequence is Ubiquinol oxidase 1, mitochondrial (353 aa).

A mitochondrion-targeting transit peptide spans 1-69 (MMTRGATRMT…RHFPVMGSRS (69 aa)). Positions 77 to 99 (DKQHDKKAENGSAAATGGGDGGD) are disordered. The helical transmembrane segment at 178–198 (AMMLETVAAVPGMVGGMLLHC) threads the bilayer. Residues glutamate 182, glutamate 221, and histidine 224 each contribute to the Fe cation site. Residues 240-260 (ALVFAVQGVFFNAYFVTYLLS) form a helical membrane-spanning segment. Residues glutamate 272, glutamate 323, and histidine 326 each coordinate Fe cation.

It belongs to the alternative oxidase family. As to quaternary structure, homodimer; disulfide-linked. It depends on Fe cation as a cofactor.

Its subcellular location is the mitochondrion inner membrane. It catalyses the reaction 2 a ubiquinol + O2 = 2 a ubiquinone + 2 H2O. Stimulated by reduction of the disulfide bond and the presence of pyruvate. Catalyzes the cyanide-resistant oxidation of ubiquinol and the reduction of molecular oxygen to water, but does not translocate protons and consequently is not linked to oxidative phosphorylation. May increase respiration when the cytochrome respiratory pathway is restricted, or in response to low temperatures. This Nicotiana tabacum (Common tobacco) protein is Ubiquinol oxidase 1, mitochondrial (AOX1).